A 362-amino-acid chain; its full sequence is Chorismate synthase (362 aa).

Residues arginine 48 and arginine 54 each contribute to the NADP(+) site. FMN is bound by residues 125–127, 238–239, glycine 286, 301–305, and arginine 327; these read RSS, NA, and KPTSS.

It belongs to the chorismate synthase family. As to quaternary structure, homotetramer. FMNH2 is required as a cofactor.

It catalyses the reaction 5-O-(1-carboxyvinyl)-3-phosphoshikimate = chorismate + phosphate. The protein operates within metabolic intermediate biosynthesis; chorismate biosynthesis; chorismate from D-erythrose 4-phosphate and phosphoenolpyruvate: step 7/7. Its function is as follows. Catalyzes the anti-1,4-elimination of the C-3 phosphate and the C-6 proR hydrogen from 5-enolpyruvylshikimate-3-phosphate (EPSP) to yield chorismate, which is the branch point compound that serves as the starting substrate for the three terminal pathways of aromatic amino acid biosynthesis. This reaction introduces a second double bond into the aromatic ring system. The sequence is that of Chorismate synthase from Granulibacter bethesdensis (strain ATCC BAA-1260 / CGDNIH1).